The following is an 84-amino-acid chain: UPF0386 protein R01313 (84 aa).

Belongs to the UPF0386 family.

The chain is UPF0386 protein R01313 from Rhizobium meliloti (strain 1021) (Ensifer meliloti).